The sequence spans 156 residues: Small ribosomal subunit protein uS7 (156 aa).

Belongs to the universal ribosomal protein uS7 family. As to quaternary structure, part of the 30S ribosomal subunit. Contacts proteins S9 and S11.

One of the primary rRNA binding proteins, it binds directly to 16S rRNA where it nucleates assembly of the head domain of the 30S subunit. Is located at the subunit interface close to the decoding center, probably blocks exit of the E-site tRNA. The sequence is that of Small ribosomal subunit protein uS7 from Pelobacter propionicus (strain DSM 2379 / NBRC 103807 / OttBd1).